A 389-amino-acid polypeptide reads, in one-letter code: GTPase Obg (389 aa).

The Obg domain maps to 1 to 159 (MKFVDEAVIK…RELRLELLLL (159 aa)). Positions 160–333 (ADVGLLGMPN…LAEKLFDFIK (174 aa)) constitute an OBG-type G domain. Residues 166-173 (GMPNAGKS), 191-195 (FTTLV), 213-216 (DIPG), 283-286 (NKTD), and 314-316 (SAA) each bind GTP. Ser-173 and Thr-193 together coordinate Mg(2+).

The protein belongs to the TRAFAC class OBG-HflX-like GTPase superfamily. OBG GTPase family. As to quaternary structure, monomer. It depends on Mg(2+) as a cofactor.

Its subcellular location is the cytoplasm. Functionally, an essential GTPase which binds GTP, GDP and possibly (p)ppGpp with moderate affinity, with high nucleotide exchange rates and a fairly low GTP hydrolysis rate. Plays a role in control of the cell cycle, stress response, ribosome biogenesis and in those bacteria that undergo differentiation, in morphogenesis control. The polypeptide is GTPase Obg (Shewanella amazonensis (strain ATCC BAA-1098 / SB2B)).